Consider the following 329-residue polypeptide: Eukaryotic translation initiation factor 3 subunit I (329 aa).

WD repeat units lie at residues 8–47, 50–89, 145–184, 187–226, and 284–323; these read GHQR…RLGT, GHGG…NIAT, ITDS…KIHS, EHTH…LLKE, and GHFG…FDYT.

This sequence belongs to the eIF-3 subunit I family. Component of the eukaryotic translation initiation factor 3 (eIF-3) complex.

The protein localises to the cytoplasm. Functionally, component of the eukaryotic translation initiation factor 3 (eIF-3) complex, which is involved in protein synthesis of a specialized repertoire of mRNAs and, together with other initiation factors, stimulates binding of mRNA and methionyl-tRNAi to the 40S ribosome. The eIF-3 complex specifically targets and initiates translation of a subset of mRNAs involved in cell proliferation. The chain is Eukaryotic translation initiation factor 3 subunit I from Bombyx mori (Silk moth).